Here is a 79-residue protein sequence, read N- to C-terminus: Small ribosomal subunit protein bS18 (79 aa).

It belongs to the bacterial ribosomal protein bS18 family. In terms of assembly, part of the 30S ribosomal subunit. Forms a tight heterodimer with protein bS6.

Functionally, binds as a heterodimer with protein bS6 to the central domain of the 16S rRNA, where it helps stabilize the platform of the 30S subunit. The chain is Small ribosomal subunit protein bS18 from Streptococcus pyogenes serotype M5 (strain Manfredo).